The chain runs to 188 residues: Small ribosomal subunit protein uS7 (188 aa).

Belongs to the universal ribosomal protein uS7 family. Part of the 30S ribosomal subunit.

Its function is as follows. One of the primary rRNA binding proteins, it binds directly to 16S rRNA where it nucleates assembly of the head domain of the 30S subunit. Is located at the subunit interface close to the decoding center. This chain is Small ribosomal subunit protein uS7, found in Methanococcus aeolicus (strain ATCC BAA-1280 / DSM 17508 / OCM 812 / Nankai-3).